Reading from the N-terminus, the 482-residue chain is Cis-aconitate decarboxylase-like protein oryM (482 aa).

It belongs to the PrpD family.

Its pathway is secondary metabolite biosynthesis. Functionally, cis-aconitate decarboxylase-like protein; part of the gene cluster that mediates the biosynthesis of oryzines, natural products with an unusual maleidride backbone. The two subunits of the fungal fatty acid synthase oryfasA and oryfasB probably form octenoic acid. This fatty acid is most likely activated by the acyl-CoA ligase oryP to give octenyl-CoA before the citrate synthase-like protein oryE catalyzes condensation with oxaloacetate to form tricarboxylic acid. The next steps of the pathways are conjectural, but a favorite possible route has been proposed, beginning with decarboxylation and concomitant dehydration by the decarboxylase oryM, followed by tautomerization, which may lead to the production of a diene intermediate. Reduction of this diene intermediate could give the known metabolite piliformic acid. On the pathway to oryzine B and oryzine A, however, hydroxylation of the diene by the alpha-ketoglutarate-dependent dioxygenase oryG and lactonisation by the lactonohydrolases oryH or oryL could give oryzine B directly. Finally, enoyl reduction by the dehydrogenase oryD would then convert oryzine B into oryzine A. The sequence is that of Cis-aconitate decarboxylase-like protein oryM from Aspergillus oryzae (strain ATCC 42149 / RIB 40) (Yellow koji mold).